A 645-amino-acid polypeptide reads, in one-letter code: 1-deoxy-D-xylulose-5-phosphate synthase (645 aa).

Thiamine diphosphate-binding positions include His-87 and 128-130; that span reads GHS. Asp-159 contacts Mg(2+). Residues 160 to 161, Asn-188, Phe-295, and Glu-384 contribute to the thiamine diphosphate site; that span reads GA. Asn-188 is a Mg(2+) binding site.

Belongs to the transketolase family. DXPS subfamily. As to quaternary structure, homodimer. Requires Mg(2+) as cofactor. It depends on thiamine diphosphate as a cofactor.

It catalyses the reaction D-glyceraldehyde 3-phosphate + pyruvate + H(+) = 1-deoxy-D-xylulose 5-phosphate + CO2. It functions in the pathway metabolic intermediate biosynthesis; 1-deoxy-D-xylulose 5-phosphate biosynthesis; 1-deoxy-D-xylulose 5-phosphate from D-glyceraldehyde 3-phosphate and pyruvate: step 1/1. Catalyzes the acyloin condensation reaction between C atoms 2 and 3 of pyruvate and glyceraldehyde 3-phosphate to yield 1-deoxy-D-xylulose-5-phosphate (DXP). This Alcanivorax borkumensis (strain ATCC 700651 / DSM 11573 / NCIMB 13689 / SK2) protein is 1-deoxy-D-xylulose-5-phosphate synthase.